The sequence spans 272 residues: Short-chain dehydrogenase reductase ATA1 (272 aa).

14 to 38 (IITGGARGIGAATARLFTENGAYVI) lines the NADP(+) pocket. A substrate-binding site is contributed by S143. The active-site Proton acceptor is Y156. Residue K160 participates in NADP(+) binding.

Belongs to the short-chain dehydrogenases/reductases (SDR) family. In terms of tissue distribution, expressed specifically in tapetal cells.

Functionally, may play a role in tapetum development. In Arabidopsis thaliana (Mouse-ear cress), this protein is Short-chain dehydrogenase reductase ATA1.